Here is a 78-residue protein sequence, read N- to C-terminus: Beta-defensin 105A (78 aa).

The first 27 residues, 1 to 27, serve as a signal peptide directing secretion; the sequence is MALIKKTFFFLFAMFFILVQLSSGCQA. 3 disulfides stabilise this stretch: Cys-43–Cys-74, Cys-53–Cys-67, and Cys-57–Cys-73.

Belongs to the beta-defensin family.

It localises to the secreted. Has antimicrobial activity. The polypeptide is Beta-defensin 105A (DEFB105A) (Pan troglodytes (Chimpanzee)).